Here is a 258-residue protein sequence, read N- to C-terminus: PHD finger protein ALFIN-LIKE 5 (258 aa).

The segment at 143–205 (AKKQTKEKAP…EEEERDNTLC (63 aa)) is disordered. Residues 152-165 (PNSTNKPNKPSSKM) are compositionally biased toward polar residues. Residues 184–200 (DDDESGDEYADEEEEER) show a composition bias toward acidic residues. A PHD-type zinc finger spans residues 202–254 (NTLCGSCGTNDGKDEFWICCDSCERWYHGKCVKITPARAEHIKHYKCPDCGNK).

Belongs to the Alfin family.

It localises to the nucleus. Functionally, histone-binding component that specifically recognizes H3 tails trimethylated on 'Lys-4' (H3K4me3), which mark transcription start sites of virtually all active genes. The chain is PHD finger protein ALFIN-LIKE 5 from Oryza sativa subsp. indica (Rice).